Reading from the N-terminus, the 443-residue chain is ATP-dependent protease ATPase subunit HslU (443 aa).

ATP is bound by residues Ile-19, 61–66 (GVGKTE), Asp-256, Glu-321, and Arg-393.

Belongs to the ClpX chaperone family. HslU subfamily. As to quaternary structure, a double ring-shaped homohexamer of HslV is capped on each side by a ring-shaped HslU homohexamer. The assembly of the HslU/HslV complex is dependent on binding of ATP.

It localises to the cytoplasm. Its function is as follows. ATPase subunit of a proteasome-like degradation complex; this subunit has chaperone activity. The binding of ATP and its subsequent hydrolysis by HslU are essential for unfolding of protein substrates subsequently hydrolyzed by HslV. HslU recognizes the N-terminal part of its protein substrates and unfolds these before they are guided to HslV for hydrolysis. This is ATP-dependent protease ATPase subunit HslU from Ralstonia nicotianae (strain ATCC BAA-1114 / GMI1000) (Ralstonia solanacearum).